The primary structure comprises 940 residues: Translation initiation factor IF-2 (940 aa).

Low complexity-rich tracts occupy residues 138-147 (APVEVVAEPE) and 161-208 (PVVV…ITEL). Residues 138–354 (APVEVVAEPE…DRQTFQAPTE (217 aa)) form a disordered region. Basic and acidic residues-rich tracts occupy residues 214–271 (IAAR…EEAA) and 289–311 (AKAD…DGAK). The 170-residue stretch at 440-609 (PRAPVVTVMG…LLQAEVLELT (170 aa)) folds into the tr-type G domain. Residues 449 to 456 (GHVDHGKT) are G1. 449 to 456 (GHVDHGKT) is a GTP binding site. Residues 474–478 (GITQH) form a G2 region. Residues 495-498 (DTPG) form a G3 region. GTP is bound by residues 495 to 499 (DTPGH) and 549 to 552 (TKID). Residues 549-552 (TKID) are G4. The interval 585-587 (SAK) is G5.

The protein belongs to the TRAFAC class translation factor GTPase superfamily. Classic translation factor GTPase family. IF-2 subfamily.

It localises to the cytoplasm. Functionally, one of the essential components for the initiation of protein synthesis. Protects formylmethionyl-tRNA from spontaneous hydrolysis and promotes its binding to the 30S ribosomal subunits. Also involved in the hydrolysis of GTP during the formation of the 70S ribosomal complex. The polypeptide is Translation initiation factor IF-2 (Azoarcus sp. (strain BH72)).